The primary structure comprises 360 residues: GTP 3',8-cyclase (360 aa).

The tract at residues 1-31 (MTVTALGVPTVRGRSEGSAVASDAPGDGPLL) is disordered. A Radical SAM core domain is found at 33-251 (RFGRSATDLR…LQPHFRLRPD (219 aa)). R42 lines the GTP pocket. 2 residues coordinate [4Fe-4S] cluster: C49 and C53. Y55 provides a ligand contact to S-adenosyl-L-methionine. C56 contributes to the [4Fe-4S] cluster binding site. Position 93 (R93) interacts with GTP. G97 is an S-adenosyl-L-methionine binding site. T124 lines the GTP pocket. Residue S148 coordinates S-adenosyl-L-methionine. Position 185 (K185) interacts with GTP. M219 contributes to the S-adenosyl-L-methionine binding site. [4Fe-4S] cluster is bound by residues C287 and C290. Position 292–294 (292–294 (RTR)) interacts with GTP. C304 serves as a coordination point for [4Fe-4S] cluster.

The protein belongs to the radical SAM superfamily. MoaA family. In terms of assembly, monomer and homodimer. It depends on [4Fe-4S] cluster as a cofactor.

It carries out the reaction GTP + AH2 + S-adenosyl-L-methionine = (8S)-3',8-cyclo-7,8-dihydroguanosine 5'-triphosphate + 5'-deoxyadenosine + L-methionine + A + H(+). It functions in the pathway cofactor biosynthesis; molybdopterin biosynthesis. In terms of biological role, catalyzes the cyclization of GTP to (8S)-3',8-cyclo-7,8-dihydroguanosine 5'-triphosphate. This chain is GTP 3',8-cyclase, found in Mycobacterium ulcerans (strain Agy99).